The primary structure comprises 324 residues: THUMP domain-containing protein 1 homolog (324 aa).

Disordered stretches follow at residues 1 to 24 (MEPASKKSKMGKNVKFNNNKKKYF) and 67 to 104 (SEKPENEPEKKQPEEGAGGDAGEDDPKPAAGGTSDDDD). The span at 68 to 80 (EKPENEPEKKQPE) shows a compositional bias: basic and acidic residues. Threonine 99 is subject to Phosphothreonine. Serine 100 carries the phosphoserine modification. The THUMP domain occupies 154 to 260 (DIATTGKSMS…RGWCLLSVID (107 aa)). The disordered stretch occupies residues 275 to 324 (NPSDKKSSGEGDSKSETSEVANGNDKEQAESSEESKSNDDENKDSTENDK). Composition is skewed to basic and acidic residues over residues 277–291 (SDKKSSGEGDSKSET) and 298–324 (NDKEQAESSEESKSNDDENKDSTENDK).

Belongs to the THUMPD1 family.

The chain is THUMP domain-containing protein 1 homolog from Drosophila melanogaster (Fruit fly).